The primary structure comprises 283 residues: Bifunctional protein FolD (283 aa).

NADP(+) is bound at residue 166–168; that stretch reads GAS.

Belongs to the tetrahydrofolate dehydrogenase/cyclohydrolase family. Homodimer.

It carries out the reaction (6R)-5,10-methylene-5,6,7,8-tetrahydrofolate + NADP(+) = (6R)-5,10-methenyltetrahydrofolate + NADPH. The catalysed reaction is (6R)-5,10-methenyltetrahydrofolate + H2O = (6R)-10-formyltetrahydrofolate + H(+). The protein operates within one-carbon metabolism; tetrahydrofolate interconversion. In terms of biological role, catalyzes the oxidation of 5,10-methylenetetrahydrofolate to 5,10-methenyltetrahydrofolate and then the hydrolysis of 5,10-methenyltetrahydrofolate to 10-formyltetrahydrofolate. The sequence is that of Bifunctional protein FolD from Coxiella burnetii (strain CbuG_Q212) (Coxiella burnetii (strain Q212)).